A 1360-amino-acid chain; its full sequence is S-layer protein A (1360 aa).

The signal sequence occupies residues 1-24 (MNKSAIRYLSLLLVFLMGGSFLAG).

Belongs to the Sulfolobales SlaA family. In terms of assembly, the mushroom-shaped unit cells of the Sulfolobales' S-layers may consist of three SlaB subunits and six SlaA subunits.

Its subcellular location is the secreted. The protein localises to the cell wall. The protein resides in the S-layer. Its function is as follows. S-layer large protein. May form the highly ordered outer sheath. In Metallosphaera sedula (strain ATCC 51363 / DSM 5348 / JCM 9185 / NBRC 15509 / TH2), this protein is S-layer protein A.